The primary structure comprises 160 residues: uncharacterized protein (160 aa).

The region spanning 9 to 151 is the N-acetyltransferase domain; it reads LLINYKTLEK…GENPLIWLPE (143 aa).

This is an uncharacterized protein from Oceanobacillus iheyensis (strain DSM 14371 / CIP 107618 / JCM 11309 / KCTC 3954 / HTE831).